The following is a 397-amino-acid chain: Phosphoglycerate kinase (397 aa).

Residues 25 to 27 (DLN), Arg41, 64 to 67 (HLGR), Arg118, and Arg151 each bind substrate. ATP contacts are provided by residues Lys202, Glu324, and 350-353 (GGDT).

Belongs to the phosphoglycerate kinase family. Monomer.

The protein resides in the cytoplasm. The enzyme catalyses (2R)-3-phosphoglycerate + ATP = (2R)-3-phospho-glyceroyl phosphate + ADP. The protein operates within carbohydrate degradation; glycolysis; pyruvate from D-glyceraldehyde 3-phosphate: step 2/5. The sequence is that of Phosphoglycerate kinase from Herminiimonas arsenicoxydans.